The chain runs to 113 residues: Hydrogenase maturation factor HypA (113 aa).

Histidine 2 is a binding site for Ni(2+). Zn(2+) contacts are provided by cysteine 73, cysteine 76, cysteine 89, and cysteine 92.

It belongs to the HypA/HybF family.

Involved in the maturation of [NiFe] hydrogenases. Required for nickel insertion into the metal center of the hydrogenase. The protein is Hydrogenase maturation factor HypA of Bradyrhizobium sp. (strain ORS 278).